Reading from the N-terminus, the 364-residue chain is Protein Wnt-16 (364 aa).

A signal peptide spans 1 to 29; it reads MDRAALLALPSLCALWAAVLSLLPCGTQG. Intrachain disulfides connect cysteine 81–cysteine 92, cysteine 138–cysteine 146, and cysteine 148–cysteine 167. N-linked (GlcNAc...) asparagine glycosylation occurs at asparagine 142. Asparagine 188 carries N-linked (GlcNAc...) asparagine glycosylation. Cystine bridges form between cysteine 220–cysteine 234, cysteine 222–cysteine 229, cysteine 293–cysteine 324, cysteine 309–cysteine 319, cysteine 323–cysteine 363, cysteine 339–cysteine 354, cysteine 341–cysteine 351, and cysteine 346–cysteine 347. Serine 226 carries the O-palmitoleoyl serine; by PORCN lipid modification. Residue asparagine 310 is glycosylated (N-linked (GlcNAc...) asparagine).

Belongs to the Wnt family. In terms of processing, palmitoleoylation is required for efficient binding to frizzled receptors. Depalmitoleoylation leads to Wnt signaling pathway inhibition.

The protein localises to the secreted. Its subcellular location is the extracellular space. It localises to the extracellular matrix. Its function is as follows. Ligand for members of the frizzled family of seven transmembrane receptors. Probable developmental protein. May be a signaling molecule which affects the development of discrete regions of tissues. Is likely to signal over only few cell diameters. The sequence is that of Protein Wnt-16 (Wnt16) from Mus musculus (Mouse).